Consider the following 579-residue polypeptide: Adenine deaminase (579 aa).

It belongs to the metallo-dependent hydrolases superfamily. Adenine deaminase family. It depends on Mn(2+) as a cofactor.

The catalysed reaction is adenine + H2O + H(+) = hypoxanthine + NH4(+). In Listeria welshimeri serovar 6b (strain ATCC 35897 / DSM 20650 / CCUG 15529 / CIP 8149 / NCTC 11857 / SLCC 5334 / V8), this protein is Adenine deaminase.